Here is a 95-residue protein sequence, read N- to C-terminus: Small ribosomal subunit protein bS20 (95 aa).

Disordered regions lie at residues 1–26 and 76–95; these read MALR…RSRK and KSRL…AQPA. Over residues 80-95 the composition is skewed to low complexity; the sequence is AKALNKAKAAQAAQPA.

It belongs to the bacterial ribosomal protein bS20 family.

Binds directly to 16S ribosomal RNA. The protein is Small ribosomal subunit protein bS20 of Deinococcus geothermalis (strain DSM 11300 / CIP 105573 / AG-3a).